The sequence spans 251 residues: MTNVGEQLKKKPMLRGGGFTFKQFFVAHDRCAMKVGTDGVLLGAWVPVEKARKVLDIGCGSGLIALMIAQRSTPEVMIDGVELEPEAAQQASSNAAQSPWAERVHIYQQDVHQFAENHLHQYDLIVSNPPYFAPAVACRDEARDTARYTGSLTHDALLNCAEKLITEDGIFCVVLPHDLGEELSRLAVQQNWFIRCQVDIRDRPGKPLHRILLTLSRQAGETEFQQLDLRQSEGVYSPEFCALISDFYLNY.

It belongs to the methyltransferase superfamily. tRNA (adenine-N(6)-)-methyltransferase family.

The protein resides in the cytoplasm. The enzyme catalyses adenosine(37) in tRNA1(Val) + S-adenosyl-L-methionine = N(6)-methyladenosine(37) in tRNA1(Val) + S-adenosyl-L-homocysteine + H(+). Specifically methylates the adenine in position 37 of tRNA(1)(Val) (anticodon cmo5UAC). In Yersinia enterocolitica serotype O:8 / biotype 1B (strain NCTC 13174 / 8081), this protein is tRNA1(Val) (adenine(37)-N6)-methyltransferase.